The primary structure comprises 421 residues: UDP-N-acetylglucosamine 1-carboxyvinyltransferase (421 aa).

22–23 contributes to the phosphoenolpyruvate binding site; sequence KN. Arg-93 is a binding site for UDP-N-acetyl-alpha-D-glucosamine. Cys-117 (proton donor) is an active-site residue. The residue at position 117 (Cys-117) is a 2-(S-cysteinyl)pyruvic acid O-phosphothioketal. UDP-N-acetyl-alpha-D-glucosamine-binding positions include 122–126, Asp-308, and Val-330; that span reads RPVDL.

The protein belongs to the EPSP synthase family. MurA subfamily.

The protein localises to the cytoplasm. The catalysed reaction is phosphoenolpyruvate + UDP-N-acetyl-alpha-D-glucosamine = UDP-N-acetyl-3-O-(1-carboxyvinyl)-alpha-D-glucosamine + phosphate. It functions in the pathway cell wall biogenesis; peptidoglycan biosynthesis. Cell wall formation. Adds enolpyruvyl to UDP-N-acetylglucosamine. This is UDP-N-acetylglucosamine 1-carboxyvinyltransferase from Stutzerimonas stutzeri (strain A1501) (Pseudomonas stutzeri).